Here is a 985-residue protein sequence, read N- to C-terminus: P3N-PIPO polyprotein (985 aa).

Residues 144-287 (TFRDGHMNKF…MATVTHMEQY (144 aa)) form the Peptidase S30 domain. Active-site for P1 proteinase activity residues include His-195, Asp-204, and Ser-238. The Involved in interaction with stylet and aphid transmission motif lies at 337–340 (KLTC). Residues 595-597 (PTK) carry the Involved in virions binding and aphid transmission motif. The Peptidase C6 domain maps to 621 to 743 (LYIALDGYCY…ESEIKHYRVG (123 aa)). Catalysis depends on for helper component proteinase activity residues Cys-629 and His-702.

It belongs to the potyviridae P3N-PIPO polyprotein family. As to quaternary structure, interacts (via PIPO domain) with host PCaP1 protein; this interaction may help to anchor the movement complex to the plasma membrane from which the complex could move to the plasmodesmata. Potyviral RNA is expressed as two polyproteins which undergo post-translational proteolytic processing. Genome polyprotein is processed by NIa-pro, P1 and HC-pro proteinases resulting in the production of at least ten individual proteins. P3N-PIPO is cleaved by P1 and HC-pro proteinases resulting in the production of three individual proteins. The P1 proteinase and the HC-pro cleave only their respective C-termini autocatalytically.

It is found in the host cell junction. The protein localises to the host plasmodesma. The enzyme catalyses Hydrolyzes a Gly-|-Gly bond at its own C-terminus, commonly in the sequence -Tyr-Xaa-Val-Gly-|-Gly, in the processing of the potyviral polyprotein.. Functionally, required for aphid transmission and also has proteolytic activity. Only cleaves a Gly-Gly dipeptide at its own C-terminus. Interacts with virions and aphid stylets. Acts as a suppressor of RNA-mediated gene silencing, also known as post-transcriptional gene silencing (PTGS), a mechanism of plant viral defense that limits the accumulation of viral RNAs. May have RNA-binding activity. In terms of biological role, allows efficient cell to cell propagation, by bypassing the host cell wall barrier. Transports viral genome to neighboring plant cells directly through plasmosdesmata, without any budding. In Pepper mottle virus (isolate California) (PeMV), this protein is P3N-PIPO polyprotein.